We begin with the raw amino-acid sequence, 166 residues long: Putative universal stress protein SA1532 (166 aa).

Belongs to the universal stress protein A family.

The protein resides in the cytoplasm. This Staphylococcus aureus (strain N315) protein is Putative universal stress protein SA1532.